We begin with the raw amino-acid sequence, 708 residues long: Solute carrier family 15 member 1 (708 aa).

The helical transmembrane segment at 1 to 21 (MGMSKSYGCFGYPLSIFFIVV) threads the bilayer. Topologically, residues 22 to 53 (NEFCERFSYYGMRALLILYFRRFIGWDDNLST) are extracellular. An N-linked (GlcNAc...) asparagine glycan is attached at N50. The chain crosses the membrane as a helical span at residues 54 to 74 (AIYHTFVALCYLTPILGALIA). Topologically, residues 75 to 82 (DSWLGKFK) are cytoplasmic. The helical transmembrane segment at 83-103 (TIVSLSIVYTIGQAVTAVSSI) threads the bilayer. Residues 104–118 (NDLTDYNKDGTPDNL) are Extracellular-facing. Residue N117 is glycosylated (N-linked (GlcNAc...) asparagine). Residues 119–139 (SVHVALSMIGLALIALGTGGI) form a helical membrane-spanning segment. Residues 140–161 (KPCVSAFGGDQFEEGQEKQRNR) are Cytoplasmic-facing. A helical transmembrane segment spans residues 162–182 (FFSIFYLAINAGSLISTIVTP). The Extracellular portion of the chain corresponds to 183-198 (MLRVHECGIYSQKACY). The chain crosses the membrane as a helical span at residues 199–219 (PLAFGVPAALMAVSLIVFVIG). Residues 220–276 (SGMYKKFQPQGNVMGKVVKCIGFALKNRFRHRSKQFPKREHWLDWAKEKYDERLISQ) lie on the Cytoplasmic side of the membrane. A helical transmembrane segment spans residues 277–297 (IKMVTKVMFLYIPLPMFWALF). The Extracellular portion of the chain corresponds to 298 to 327 (DQQGSRWTLQATAMSGKIGLLEVQPDQMQT). The helical transmembrane segment at 328 to 348 (VNAILIVVMVPIMDAVVYPLI) threads the bilayer. Residues 349 to 361 (AKCGFNFTSLKRM) are Cytoplasmic-facing. The helical transmembrane segment at 362-382 (TVGMFLASMAFVMAAIVQLEI) threads the bilayer. Over 383-584 (DKTLPVFPKQ…ISPNTVNMAL (202 aa)) the chain is Extracellular. The interval 383–585 (DKTLPVFPKQ…SPNTVNMALQ (203 aa)) is extracellular domain (ECD). N408, N439, N495, N499, N509, N514, N527, and N539 each carry an N-linked (GlcNAc...) asparagine glycan. The chain crosses the membrane as a helical span at residues 585–605 (QIPQYFLITCGEVVFSVTGLE). Residues 606-619 (FSYSQAPSNMKSVL) are Cytoplasmic-facing. The helical transmembrane segment at 620 to 640 (QAGWLLTVAVGNIIVLIVAGA) threads the bilayer. At 641 to 645 (GQFSE) the chain is on the extracellular side. The helical transmembrane segment at 646–666 (QWAEYILFAALLLVVCVIFAI) threads the bilayer. The Cytoplasmic portion of the chain corresponds to 667 to 708 (MARFYTYVNPAEIEAQFDDDEKKNLEKMNVYSTVTPVSQTQM).

Belongs to the major facilitator superfamily. Proton-dependent oligopeptide transporter (POT/PTR) (TC 2.A.17) family. As to quaternary structure, interacts (via extracellular domain region) with trypsin.

It localises to the apical cell membrane. The enzyme catalyses a dipeptide(out) + H(+)(out) = a dipeptide(in) + H(+)(in). The catalysed reaction is an L-amino acid tripeptide(out) + H(+)(out) = an L-amino acid tripeptide(in) + H(+)(in). It catalyses the reaction L-alanyl-L-lysine(out) + H(+)(out) = L-alanyl-L-lysine(in) + H(+)(in). It carries out the reaction L-alanyl-L-proline(out) + H(+)(out) = L-alanyl-L-proline(in) + H(+)(in). The enzyme catalyses L-alanyl-L-valine(out) + H(+)(out) = L-alanyl-L-valine(in) + H(+)(in). The catalysed reaction is carnosine(out) + H(+)(out) = carnosine(in) + H(+)(in). It catalyses the reaction glycyl-L-glutamine(out) + H(+)(out) = glycyl-L-glutamine(in) + H(+)(in). It carries out the reaction glycyl-L-leucine(out) + H(+)(out) = glycyl-L-leucine(in) + H(+)(in). The enzyme catalyses glycyl-L-proline(out) + H(+)(out) = glycyl-L-proline(in) + H(+)(in). The catalysed reaction is glycyl-sarcosine(out) + H(+)(out) = glycyl-sarcosine(in) + H(+)(in). It catalyses the reaction L-leucyl-L-leucine(out) + H(+)(out) = L-leucyl-L-leucine(in) + H(+)(in). It carries out the reaction L-leucyl-L-proline(out) + H(+)(out) = L-leucyl-L-proline(in) + H(+)(in). The enzyme catalyses L-phenylalanyl-L-leucine(out) + H(+)(out) = L-phenylalanyl-L-leucine(in) + H(+)(in). The catalysed reaction is L-phenylalanyl-L-phenylalanine(out) + H(+)(out) = L-phenylalanyl-L-phenylalanine(in) + H(+)(in). It catalyses the reaction L-lysyl-glycine(out) + H(+)(out) = L-lysyl-glycine(in) + H(+)(in). It carries out the reaction L-tyrosylglycine(out) + H(+)(out) = L-tyrosylglycine(in) + H(+)(in). The enzyme catalyses L-alanyl-L-aspartate(out) + 2 H(+)(out) = L-alanyl-L-aspartate(in) + 2 H(+)(in). The catalysed reaction is L-aspartyl-glycine(out) + 2 H(+)(out) = L-aspartyl-glycine(in) + 2 H(+)(in). It catalyses the reaction glycyl-L-aspartate(out) + 2 H(+)(out) = glycyl-L-aspartate(in) + 2 H(+)(in). It carries out the reaction glycyl-L-glutamate(out) + 2 H(+)(out) = glycyl-L-glutamate(in) + 2 H(+)(in). The enzyme catalyses L-alanyl-L-leucyl-L-alanine(out) + H(+)(out) = L-alanyl-L-leucyl-L-alanine(in) + H(+)(in). The catalysed reaction is L-alanyl-L-prolylglycine(out) + H(+)(out) = L-alanyl-L-prolylglycine(in) + H(+)(in). It catalyses the reaction glycylglycyl-L-isoleucine(out) + H(+)(out) = glycylglycyl-L-isoleucine(in) + H(+)(in). It carries out the reaction glycylglycyl-L-proline(out) + H(+)(out) = glycylglycyl-L-proline(in) + H(+)(in). The enzyme catalyses L-methionyl-L-phenylalanyl-L-methionine(out) + H(+)(out) = L-methionyl-L-phenylalanyl-L-methionine(in) + H(+)(in). The catalysed reaction is N-acetyl-D-muramoyl-L-alanyl-D-isoglutamine(out) + 2 H(+)(out) = N-acetyl-D-muramoyl-L-alanyl-D-isoglutamine(in) + 2 H(+)(in). It catalyses the reaction N(alpha)-formyl-L-methionyl-L-leucyl-L-phenylalanine(out) + 2 H(+)(out) = N(alpha)-formyl-L-methionyl-L-leucyl-L-phenylalanine(in) + 2 H(+)(in). Functionally, electrogenic proton-coupled amino-acid transporter that transports oligopeptides of 2 to 4 amino acids with a preference for dipeptides. Transports neutral and monovalently charged peptides with a proton to peptide stoichiometry of 1:1 or 2:1. Primarily responsible for the absorption of dietary di- and tripeptides from the small intestinal lumen. Mediates transepithelial transport of muramyl and N-formylated bacterial dipeptides contributing to recognition of pathogenic bacteria by the mucosal immune system. This Canis lupus familiaris (Dog) protein is Solute carrier family 15 member 1 (SLC15A1).